The primary structure comprises 119 residues: Small ribosomal subunit protein uS13 (119 aa).

Residues 93–119 are disordered; the sequence is RRGLPLRGQRTRSNARTRKGKRKPIRS.

Belongs to the universal ribosomal protein uS13 family. Part of the 30S ribosomal subunit. Forms a loose heterodimer with protein S19. Forms two bridges to the 50S subunit in the 70S ribosome.

Located at the top of the head of the 30S subunit, it contacts several helices of the 16S rRNA. In the 70S ribosome it contacts the 23S rRNA (bridge B1a) and protein L5 of the 50S subunit (bridge B1b), connecting the 2 subunits; these bridges are implicated in subunit movement. Contacts the tRNAs in the A and P-sites. The protein is Small ribosomal subunit protein uS13 of Coxiella burnetii (strain RSA 493 / Nine Mile phase I).